Reading from the N-terminus, the 197-residue chain is Imidazoleglycerol-phosphate dehydratase (197 aa).

The protein belongs to the imidazoleglycerol-phosphate dehydratase family.

The protein localises to the cytoplasm. The enzyme catalyses D-erythro-1-(imidazol-4-yl)glycerol 3-phosphate = 3-(imidazol-4-yl)-2-oxopropyl phosphate + H2O. The protein operates within amino-acid biosynthesis; L-histidine biosynthesis; L-histidine from 5-phospho-alpha-D-ribose 1-diphosphate: step 6/9. The sequence is that of Imidazoleglycerol-phosphate dehydratase from Laribacter hongkongensis (strain HLHK9).